The primary structure comprises 278 residues: Shikimate dehydrogenase (NADP(+)) (278 aa).

Shikimate is bound by residues 14–16 (SKS) and Thr61. The active-site Proton acceptor is Lys65. 2 residues coordinate shikimate: Asn86 and Asp102. NADP(+) contacts are provided by residues 127 to 131 (GAGGA), 151 to 156 (NRTASK), and Met221. Tyr223 contributes to the shikimate binding site. Gly245 lines the NADP(+) pocket.

It belongs to the shikimate dehydrogenase family. As to quaternary structure, homodimer.

It carries out the reaction shikimate + NADP(+) = 3-dehydroshikimate + NADPH + H(+). Its pathway is metabolic intermediate biosynthesis; chorismate biosynthesis; chorismate from D-erythrose 4-phosphate and phosphoenolpyruvate: step 4/7. Its function is as follows. Involved in the biosynthesis of the chorismate, which leads to the biosynthesis of aromatic amino acids. Catalyzes the reversible NADPH linked reduction of 3-dehydroshikimate (DHSA) to yield shikimate (SA). The protein is Shikimate dehydrogenase (NADP(+)) of Saccharophagus degradans (strain 2-40 / ATCC 43961 / DSM 17024).